A 413-amino-acid polypeptide reads, in one-letter code: L-arginine-specific L-amino acid ligase (413 aa).

One can recognise an ATP-grasp domain in the interval 115 to 312 (KTKLKMEGIP…LWESSLNISV (198 aa)). ATP is bound at residue 141 to 202 (GEKLGWPIIV…EKCIEMEEFH (62 aa)). The Mg(2+) site is built by glutamate 268 and glutamate 281. 2 residues coordinate Mn(2+): glutamate 268 and glutamate 281.

As to quaternary structure, homodimer. The cofactor is Mg(2+). Requires Mn(2+) as cofactor. It depends on Co(2+) as a cofactor.

The enzyme catalyses an L-alpha-amino acid + L-arginine + ATP = L-arginyl-L-alpha-amino acid + ADP + phosphate + H(+). In terms of biological role, catalyzes the synthesis of Arg-Xaa dipeptides in an ATP-dependent manner. Has strict specificity toward arginine as the N-terminal substrate. The protein is L-arginine-specific L-amino acid ligase of Bacillus subtilis.